The sequence spans 312 residues: Olfactory receptor 6B2 (312 aa).

Over 1-25 (MSGENVTKVSTFILVGLPTAPGLQY) the chain is Extracellular. Asn-5 carries an N-linked (GlcNAc...) asparagine glycan. Residues 26-46 (LLFLLFLLTYLFVLVENLAII) form a helical membrane-spanning segment. Topologically, residues 47–54 (LIVWSSTS) are cytoplasmic. A helical membrane pass occupies residues 55–75 (LHRPMYYFLSSMSFLEIWYVS). Over 76–99 (DITPKMLEGFLLQQKRISFVGCMT) the chain is Extracellular. The cysteines at positions 97 and 189 are disulfide-linked. A helical transmembrane segment spans residues 100–120 (QLYFFSSLVCTECVLLASMAY). The Cytoplasmic portion of the chain corresponds to 121-139 (DRYVAICHPLRYHVLVTPG). The helical transmembrane segment at 140-160 (LCLQLVGFSFVSGFTISMIKV) threads the bilayer. The Extracellular segment spans residues 161 to 196 (CFISSVTFCGSNVLNHFFCDISPILKLACTDFSTAE). Residues 197–217 (LVDFILAFIILVFPLLATILS) form a helical membrane-spanning segment. Over 218-237 (YWHITLAVLRIPSATGCWRA) the chain is Cytoplasmic. The chain crosses the membrane as a helical span at residues 238–258 (FSTCASHLTVVTVFYTALLFM). Residues 259–271 (YVRPQAIDSQSSN) lie on the Extracellular side of the membrane. Residues 272–292 (KLISAVYTVVTPIINPLIYCL) traverse the membrane as a helical segment. Residues 293 to 312 (RNKEFKDALKKALGLGQTSH) lie on the Cytoplasmic side of the membrane.

This sequence belongs to the G-protein coupled receptor 1 family.

It localises to the cell membrane. In terms of biological role, odorant receptor. The protein is Olfactory receptor 6B2 (OR6B2) of Homo sapiens (Human).